Here is a 298-residue protein sequence, read N- to C-terminus: Isochorismatase domain-containing protein 1 (298 aa).

Phosphotyrosine is present on Tyr160. Lys279 carries the post-translational modification N6-succinyllysine.

This sequence belongs to the isochorismatase family.

The chain is Isochorismatase domain-containing protein 1 (ISOC1) from Homo sapiens (Human).